We begin with the raw amino-acid sequence, 417 residues long: Serine hydroxymethyltransferase (417 aa).

(6S)-5,6,7,8-tetrahydrofolate-binding positions include leucine 112 and 116 to 118 (GHL). At lysine 221 the chain carries N6-(pyridoxal phosphate)lysine. (6S)-5,6,7,8-tetrahydrofolate is bound at residue glutamate 247.

Belongs to the SHMT family. In terms of assembly, homodimer. Pyridoxal 5'-phosphate serves as cofactor.

It is found in the cytoplasm. It catalyses the reaction (6R)-5,10-methylene-5,6,7,8-tetrahydrofolate + glycine + H2O = (6S)-5,6,7,8-tetrahydrofolate + L-serine. It functions in the pathway one-carbon metabolism; tetrahydrofolate interconversion. It participates in amino-acid biosynthesis; glycine biosynthesis; glycine from L-serine: step 1/1. Catalyzes the reversible interconversion of serine and glycine with tetrahydrofolate (THF) serving as the one-carbon carrier. This reaction serves as the major source of one-carbon groups required for the biosynthesis of purines, thymidylate, methionine, and other important biomolecules. Also exhibits THF-independent aldolase activity toward beta-hydroxyamino acids, producing glycine and aldehydes, via a retro-aldol mechanism. This is Serine hydroxymethyltransferase from Borrelia duttonii (strain Ly).